We begin with the raw amino-acid sequence, 300 residues long: MTKASVAIVGSGNISTDLLYKLQRSEWLEPRWMIGIDPESEGLARARKLGLETSAEGVDWLLNQPEKPDLVFEATSAYVHREAAPRYEAAGIRAVDLTPAAVGPAVVPPANLREHLGAPNVNMITCGGQATIPIVYAVSRVVDVPYAEIVASVASVSAGPGTRANIDEFTKTTSRGIETIGGAQRGKAIIILNPADPPMIMRDTIFCAIPEDADRAAITDSIHRVVADIQQYVPGYRLLNEPQFDDPSVVSGGQATVTTFVEVEGAGDFLPPYAGNLDIMTAAATKVGEEIAQKLLSVEA.

Residue 11 to 14 participates in NAD(+) binding; it reads SGNI. The active-site Acyl-thioester intermediate is the Cys-126. NAD(+)-binding positions include 157–165 and Asn-276; that span reads SAGPGTRAN.

It belongs to the acetaldehyde dehydrogenase family.

It catalyses the reaction acetaldehyde + NAD(+) + CoA = acetyl-CoA + NADH + H(+). The protein is Acetaldehyde dehydrogenase 3 (hsaG) of Rhodococcus jostii (strain RHA1).